The primary structure comprises 355 residues: Serpentine receptor class epsilon-1 (355 aa).

A run of 7 helical transmembrane segments spans residues 28-48, 56-76, 102-122, 144-164, 172-192, 232-252, and 268-288; these read FELL…YATI, LNFI…GRFI, ILSS…SLAV, ISLF…IVML, VMAF…LVLF, VVLF…MYMS, and FAFN…IIFS.

Belongs to the nematode receptor-like protein sre family.

It localises to the membrane. The sequence is that of Serpentine receptor class epsilon-1 (sre-1) from Caenorhabditis elegans.